The sequence spans 468 residues: Na(+)/H(+) antiporter NhaA (468 aa).

Helical transmembrane passes span 28–48 (FLHV…IALV), 79–99 (LHFW…GMEI), 115–135 (ALPL…YLAF), 143–163 (AGWA…LALL), 173–193 (IFLL…IAFF), 196–216 (GGLD…VLGL), 219–239 (IGIG…TGLL), 240–260 (MTGA…PVVP), 317–337 (ALHP…NAGV), 356–376 (VAGA…WLLV), 392–412 (IVLI…IAML), and 426–446 (LGVL…GAIY).

It belongs to the NhaA Na(+)/H(+) (TC 2.A.33) antiporter family.

Its subcellular location is the cell inner membrane. It catalyses the reaction Na(+)(in) + 2 H(+)(out) = Na(+)(out) + 2 H(+)(in). Functionally, na(+)/H(+) antiporter that extrudes sodium in exchange for external protons. The protein is Na(+)/H(+) antiporter NhaA of Bordetella petrii (strain ATCC BAA-461 / DSM 12804 / CCUG 43448).